The following is a 109-amino-acid chain: Spermidine export protein MdtI (109 aa).

Helical transmembrane passes span 6-26, 36-56, 64-84, and 88-108; these read WIHA…NVFL, IYGI…SQAV, AYAL…WVLF, and LNNK…LIKL.

This sequence belongs to the drug/metabolite transporter (DMT) superfamily. Small multidrug resistance (SMR) (TC 2.A.7.1) family. MdtI subfamily. As to quaternary structure, forms a complex with MdtJ.

It is found in the cell inner membrane. Its function is as follows. Catalyzes the excretion of spermidine. The polypeptide is Spermidine export protein MdtI (Klebsiella pneumoniae subsp. pneumoniae (strain ATCC 700721 / MGH 78578)).